The primary structure comprises 62 residues: Photosystem II reaction center protein Z (62 aa).

2 helical membrane passes run 8 to 28 (AVFA…VVLA) and 41 to 61 (FSGA…NSLI).

This sequence belongs to the PsbZ family. PSII is composed of 1 copy each of membrane proteins PsbA, PsbB, PsbC, PsbD, PsbE, PsbF, PsbH, PsbI, PsbJ, PsbK, PsbL, PsbM, PsbT, PsbY, PsbZ, Psb30/Ycf12, at least 3 peripheral proteins of the oxygen-evolving complex and a large number of cofactors. It forms dimeric complexes.

Its subcellular location is the plastid. The protein resides in the chloroplast thylakoid membrane. May control the interaction of photosystem II (PSII) cores with the light-harvesting antenna, regulates electron flow through the 2 photosystem reaction centers. PSII is a light-driven water plastoquinone oxidoreductase, using light energy to abstract electrons from H(2)O, generating a proton gradient subsequently used for ATP formation. The polypeptide is Photosystem II reaction center protein Z (Huperzia lucidula (Shining clubmoss)).